Here is a 180-residue protein sequence, read N- to C-terminus: tRNA (cytidine(56)-2'-O)-methyltransferase (180 aa).

S-adenosyl-L-methionine contacts are provided by residues Leu82, 112–116 (GAEKV), and 130–137 (VGNQPHSE).

The protein belongs to the aTrm56 family. As to quaternary structure, homodimer.

Its subcellular location is the cytoplasm. It catalyses the reaction cytidine(56) in tRNA + S-adenosyl-L-methionine = 2'-O-methylcytidine(56) in tRNA + S-adenosyl-L-homocysteine + H(+). Its function is as follows. Specifically catalyzes the AdoMet-dependent 2'-O-ribose methylation of cytidine at position 56 in tRNAs. This is tRNA (cytidine(56)-2'-O)-methyltransferase from Methanococcus vannielii (strain ATCC 35089 / DSM 1224 / JCM 13029 / OCM 148 / SB).